A 524-amino-acid polypeptide reads, in one-letter code: Probable serine/threonine-protein kinase WNK10 (524 aa).

The Protein kinase domain maps to 16–273 (IRYNDVLGRG…ALELLKDQLL (258 aa)). ATP-binding positions include 96–99 (TELF) and K146. D163 (proton acceptor) is an active-site residue. S477 carries the phosphoserine modification. The stretch at 480–523 (SNKQSEDLKTELNVIESQYNQSCQRLLRMKEEAIEKAKRKWMKL) forms a coiled coil.

Belongs to the protein kinase superfamily. Ser/Thr protein kinase family. WNK subfamily.

The catalysed reaction is L-seryl-[protein] + ATP = O-phospho-L-seryl-[protein] + ADP + H(+). The enzyme catalyses L-threonyl-[protein] + ATP = O-phospho-L-threonyl-[protein] + ADP + H(+). Functionally, may regulate flowering time by modulating the photoperiod pathway. This is Probable serine/threonine-protein kinase WNK10 (WNK10) from Arabidopsis thaliana (Mouse-ear cress).